The primary structure comprises 445 residues: E3 ubiquitin-protein ligase MYLIP (445 aa).

One can recognise an FERM domain in the interval 1-279; the sequence is MLCYVTRPDA…ETHAFYRCDT (279 aa). Residues C360, C363, and C368 each coordinate Fe cation. An RING-type zinc finger spans residues 387 to 422; that stretch reads CMVCCEEEINSTFCPCGHTVCCESCAAQLQSCPVCR. Positions 431-433 are critical for homodimerization; sequence VYL.

In terms of assembly, homodimer. Interacts with the E2 ubiquitin-conjugating enzyme, UBE2D1 (via RING-type zinc finger). Interacts with myosin regulatory light chain (MRLC) and TMEM4. Autoubiquitinated. Ubiquitously expressed.

It is found in the cytoplasm. It localises to the cell membrane. It carries out the reaction S-ubiquitinyl-[E2 ubiquitin-conjugating enzyme]-L-cysteine + [acceptor protein]-L-lysine = [E2 ubiquitin-conjugating enzyme]-L-cysteine + N(6)-ubiquitinyl-[acceptor protein]-L-lysine.. The protein operates within protein modification; protein ubiquitination. Can bind 1 iron ion per dimer. Iron binding seems to decrease LDLR degradation activity. Its function is as follows. E3 ubiquitin-protein ligase that mediates ubiquitination and subsequent proteasomal degradation of myosin regulatory light chain (MRLC), LDLR, VLDLR and LRP8. Activity depends on E2 enzymes of the UBE2D family. Proteasomal degradation of MRLC leads to inhibit neurite outgrowth in presence of NGF by counteracting the stabilization of MRLC by saposin-like protein (CNPY2/MSAP) and reducing CNPY2-stimulated neurite outgrowth. Acts as a sterol-dependent inhibitor of cellular cholesterol uptake by mediating ubiquitination and subsequent degradation of LDLR. In Homo sapiens (Human), this protein is E3 ubiquitin-protein ligase MYLIP (MYLIP).